Consider the following 161-residue polypeptide: Phosphopantetheine adenylyltransferase (161 aa).

A substrate-binding site is contributed by Ser11. ATP is bound by residues 11–12 and His19; that span reads SF. Positions 43, 75, and 89 each coordinate substrate. ATP-binding positions include 90–92, Glu100, and 125–131; these read GLR and YSFISSS.

Belongs to the bacterial CoaD family. In terms of assembly, homohexamer. Mg(2+) serves as cofactor.

It is found in the cytoplasm. It catalyses the reaction (R)-4'-phosphopantetheine + ATP + H(+) = 3'-dephospho-CoA + diphosphate. Its pathway is cofactor biosynthesis; coenzyme A biosynthesis; CoA from (R)-pantothenate: step 4/5. Reversibly transfers an adenylyl group from ATP to 4'-phosphopantetheine, yielding dephospho-CoA (dPCoA) and pyrophosphate. The sequence is that of Phosphopantetheine adenylyltransferase from Staphylococcus epidermidis (strain ATCC 35984 / DSM 28319 / BCRC 17069 / CCUG 31568 / BM 3577 / RP62A).